Reading from the N-terminus, the 301-residue chain is Sulfate adenylyltransferase subunit 2 (301 aa).

The interval 279-301 is disordered; the sequence is RQGRMIDHDSSGSMEEKKKQGYF.

Belongs to the PAPS reductase family. CysD subfamily. Heterodimer composed of CysD, the smaller subunit, and CysN.

The catalysed reaction is sulfate + ATP + H(+) = adenosine 5'-phosphosulfate + diphosphate. It functions in the pathway sulfur metabolism; hydrogen sulfide biosynthesis; sulfite from sulfate: step 1/3. Its function is as follows. With CysN forms the ATP sulfurylase (ATPS) that catalyzes the adenylation of sulfate producing adenosine 5'-phosphosulfate (APS) and diphosphate, the first enzymatic step in sulfur assimilation pathway. APS synthesis involves the formation of a high-energy phosphoric-sulfuric acid anhydride bond driven by GTP hydrolysis by CysN coupled to ATP hydrolysis by CysD. The polypeptide is Sulfate adenylyltransferase subunit 2 (Marinomonas sp. (strain MWYL1)).